A 271-amino-acid chain; its full sequence is Ubiquitin thioesterase OTUB1 (271 aa).

Position 2 is an N-acetylalanine (alanine 2). The residue at position 16 (serine 16) is a Phosphoserine. The residue at position 26 (tyrosine 26) is a Phosphotyrosine; by SRC. Residues 80–271 (SYIRKTRPDG…RPGHYDILYK (192 aa)) form the OTU domain. Aspartate 88 is an active-site residue. Cysteine 91 acts as the Nucleophile in catalysis. Ubiquitin-conjugating enzyme E2 binding regions lie at residues 130-138 (FTEFTIEDF) and 169-177 (DYLVVYLRL). Residues 189 to 195 (FFEHFIE) are free ubiquitin binding. The segment at 206–213 (QEVEPMCK) is ubiquitin-conjugating enzyme E2 binding. 2 free ubiquitin binding regions span residues 214–221 (ESDHIHII) and 245–251 (NPHIFPE). Residue histidine 265 is part of the active site.

Belongs to the peptidase C65 family. In terms of assembly, interacts with FUS and RACK1. Interacts with UBE2D1/UBCH5A, UBE2W/UBC16 and UBE2N/UBC13. As to quaternary structure, interacts with RNF128. Forms a ternary complex with RNF128 and USP8. Interacts with the C-terminal UCH catalytic domain of USP8. Interacts with RNF128. Does not associate with USP8. Post-translationally, phosphorylation at Tyr-26 by SRC and SRMS promotes deubiquitination of RPTOR via a non-catalytic process. As to expression, isoform 1 is ubiquitous. Isoform 2 is expressed only in lymphoid tissues such as tonsils, lymph nodes and spleen, as well as peripheral blood mononuclear cells.

The protein resides in the cytoplasm. It catalyses the reaction Thiol-dependent hydrolysis of ester, thioester, amide, peptide and isopeptide bonds formed by the C-terminal Gly of ubiquitin (a 76-residue protein attached to proteins as an intracellular targeting signal).. By free ubiquitin: binding of free ubiquitin triggers conformational changes in the OTU domain and formation of a ubiquitin-binding helix in the N-terminus, promoting binding of the conjugated donor ubiquitin in UBE2N/UBC13 to OTUB1. In terms of biological role, hydrolase that can specifically remove 'Lys-48'-linked conjugated ubiquitin from proteins and plays an important regulatory role at the level of protein turnover by preventing degradation. Regulator of T-cell anergy, a phenomenon that occurs when T-cells are rendered unresponsive to antigen rechallenge and no longer respond to their cognate antigen. Acts via its interaction with RNF128/GRAIL, a crucial inductor of CD4 T-cell anergy. Isoform 1 destabilizes RNF128, leading to prevent anergy. In contrast, isoform 2 stabilizes RNF128 and promotes anergy. Surprisingly, it regulates RNF128-mediated ubiquitination, but does not deubiquitinate polyubiquitinated RNF128. Deubiquitinates estrogen receptor alpha (ESR1). Mediates deubiquitination of 'Lys-48'-linked polyubiquitin chains, but not 'Lys-63'-linked polyubiquitin chains. Not able to cleave di-ubiquitin. Also capable of removing NEDD8 from NEDD8 conjugates, but with a much lower preference compared to 'Lys-48'-linked ubiquitin. Its function is as follows. Plays a key non-catalytic role in DNA repair regulation by inhibiting activity of RNF168, an E3 ubiquitin-protein ligase that promotes accumulation of 'Lys-63'-linked histone H2A and H2AX at DNA damage sites. Inhibits RNF168 independently of ubiquitin thioesterase activity by binding and inhibiting UBE2N/UBC13, the E2 partner of RNF168, thereby limiting spreading of 'Lys-63'-linked histone H2A and H2AX marks. Inhibition occurs by binding to free ubiquitin: free ubiquitin acts as an allosteric regulator that increases affinity for UBE2N/UBC13 and disrupts interaction with UBE2V1. The OTUB1-UBE2N/UBC13-free ubiquitin complex adopts a configuration that mimics a cleaved 'Lys48'-linked di-ubiquitin chain. Acts as a regulator of mTORC1 and mTORC2 complexes. When phosphorylated at Tyr-26, acts as an activator of the mTORC1 complex by mediating deubiquitination of RPTOR via a non-catalytic process: acts by binding and inhibiting the activity of the ubiquitin-conjugating enzyme E2 (UBE2D1/UBCH5A, UBE2W/UBC16 and UBE2N/UBC13), thereby preventing ubiquitination of RPTOR. Can also act as an inhibitor of the mTORC1 and mTORC2 complexes in response to amino acids by mediating non-catalytic deubiquitination of DEPTOR. In Homo sapiens (Human), this protein is Ubiquitin thioesterase OTUB1 (OTUB1).